The primary structure comprises 120 residues: UPF0102 protein COXBURSA331_A1934 (120 aa).

This sequence belongs to the UPF0102 family.

In Coxiella burnetii (strain RSA 331 / Henzerling II), this protein is UPF0102 protein COXBURSA331_A1934.